Consider the following 106-residue polypeptide: uncharacterized protein (106 aa).

This is an uncharacterized protein from Methanocaldococcus jannaschii (strain ATCC 43067 / DSM 2661 / JAL-1 / JCM 10045 / NBRC 100440) (Methanococcus jannaschii).